The sequence spans 434 residues: Glutamyl-tRNA reductase 2 (434 aa).

Substrate is bound by residues 57–60 (TCNR), Ser-113, 118–120 (DFE), and Gln-124. Cys-58 serves as the catalytic Nucleophile. 193–198 (GTGKIG) lines the NADP(+) pocket.

The protein belongs to the glutamyl-tRNA reductase family. In terms of assembly, homodimer.

The catalysed reaction is (S)-4-amino-5-oxopentanoate + tRNA(Glu) + NADP(+) = L-glutamyl-tRNA(Glu) + NADPH + H(+). Its pathway is porphyrin-containing compound metabolism; protoporphyrin-IX biosynthesis; 5-aminolevulinate from L-glutamyl-tRNA(Glu): step 1/2. Functionally, catalyzes the NADPH-dependent reduction of glutamyl-tRNA(Glu) to glutamate 1-semialdehyde (GSA). This Flavobacterium johnsoniae (strain ATCC 17061 / DSM 2064 / JCM 8514 / BCRC 14874 / CCUG 350202 / NBRC 14942 / NCIMB 11054 / UW101) (Cytophaga johnsonae) protein is Glutamyl-tRNA reductase 2.